Here is a 355-residue protein sequence, read N- to C-terminus: UDP-N-acetylglucosamine--N-acetylmuramyl-(pentapeptide) pyrophosphoryl-undecaprenol N-acetylglucosamine transferase (355 aa).

UDP-N-acetyl-alpha-D-glucosamine is bound by residues 11–13, arginine 164, serine 194, and glutamine 289; that span reads TAG.

The protein belongs to the glycosyltransferase 28 family. MurG subfamily.

The protein localises to the cell membrane. The enzyme catalyses di-trans,octa-cis-undecaprenyl diphospho-N-acetyl-alpha-D-muramoyl-L-alanyl-D-glutamyl-meso-2,6-diaminopimeloyl-D-alanyl-D-alanine + UDP-N-acetyl-alpha-D-glucosamine = di-trans,octa-cis-undecaprenyl diphospho-[N-acetyl-alpha-D-glucosaminyl-(1-&gt;4)]-N-acetyl-alpha-D-muramoyl-L-alanyl-D-glutamyl-meso-2,6-diaminopimeloyl-D-alanyl-D-alanine + UDP + H(+). The protein operates within cell wall biogenesis; peptidoglycan biosynthesis. Its function is as follows. Cell wall formation. Catalyzes the transfer of a GlcNAc subunit on undecaprenyl-pyrophosphoryl-MurNAc-pentapeptide (lipid intermediate I) to form undecaprenyl-pyrophosphoryl-MurNAc-(pentapeptide)GlcNAc (lipid intermediate II). The protein is UDP-N-acetylglucosamine--N-acetylmuramyl-(pentapeptide) pyrophosphoryl-undecaprenol N-acetylglucosamine transferase of Lachnoclostridium phytofermentans (strain ATCC 700394 / DSM 18823 / ISDg) (Clostridium phytofermentans).